The chain runs to 176 residues: 3-hydroxydecanoyl-[acyl-carrier-protein] dehydratase (176 aa).

The active site involves His-71.

The protein belongs to the thioester dehydratase family. FabA subfamily. In terms of assembly, homodimer.

It is found in the cytoplasm. The enzyme catalyses a (3R)-hydroxyacyl-[ACP] = a (2E)-enoyl-[ACP] + H2O. It catalyses the reaction (3R)-hydroxydecanoyl-[ACP] = (2E)-decenoyl-[ACP] + H2O. It carries out the reaction (2E)-decenoyl-[ACP] = (3Z)-decenoyl-[ACP]. It functions in the pathway lipid metabolism; fatty acid biosynthesis. Necessary for the introduction of cis unsaturation into fatty acids. Catalyzes the dehydration of (3R)-3-hydroxydecanoyl-ACP to E-(2)-decenoyl-ACP and then its isomerization to Z-(3)-decenoyl-ACP. Can catalyze the dehydratase reaction for beta-hydroxyacyl-ACPs with saturated chain lengths up to 16:0, being most active on intermediate chain length. This is 3-hydroxydecanoyl-[acyl-carrier-protein] dehydratase from Afipia carboxidovorans (strain ATCC 49405 / DSM 1227 / KCTC 32145 / OM5) (Oligotropha carboxidovorans).